Here is a 204-residue protein sequence, read N- to C-terminus: Recombination protein RecR (204 aa).

The C4-type zinc-finger motif lies at 63–78; the sequence is CRRCFNITVGELCAIC. The Toprim domain occupies 86-181; that stretch reads TKICVVEEPL…RVTRPARGLP (96 aa).

It belongs to the RecR family.

In terms of biological role, may play a role in DNA repair. It seems to be involved in an RecBC-independent recombinational process of DNA repair. It may act with RecF and RecO. This Chloroflexus aurantiacus (strain ATCC 29366 / DSM 635 / J-10-fl) protein is Recombination protein RecR.